Here is a 361-residue protein sequence, read N- to C-terminus: RLA class I histocompatibility antigen, alpha chain 19-1 (361 aa).

The N-terminal stretch at 1 to 24 is a signal peptide; it reads MGSIPPRTLLLLLAGALTLKDTQA. An alpha-1 region spans residues 25–114; it reads GSHSMRYFYT…ALRYYNQSAA (90 aa). At 25–308 the chain is on the extracellular side; it reads GSHSMRYFYT…EPPAQPTALI (284 aa). Asn-110 carries N-linked (GlcNAc...) asparagine glycosylation. An alpha-2 region spans residues 115-206; the sequence is GSHTFQTMFG…EMGKETLQRA (92 aa). 2 disulfide bridges follow: Cys-125–Cys-188 and Cys-227–Cys-283. The tract at residues 207 to 298 is alpha-3; the sequence is DPPKAHVTHH…GLPEPLTLTW (92 aa). Residues 209-297 form the Ig-like C1-type domain; the sequence is PKAHVTHHPA…EGLPEPLTLT (89 aa). The connecting peptide stretch occupies residues 299 to 308; that stretch reads EPPAQPTALI. Residues 309–329 traverse the membrane as a helical segment; that stretch reads VGIVAGVLGVLLILGAVVAVV. Over 330 to 361 the chain is Cytoplasmic; the sequence is RRKKHSSDGKGGRYTPAAGGHRDQGSDDSLMP. The disordered stretch occupies residues 335-361; sequence SSDGKGGRYTPAAGGHRDQGSDDSLMP. Ser-355 and Ser-358 each carry phosphoserine.

Belongs to the MHC class I family. Heterodimer of an alpha chain and a beta chain (beta-2-microglobulin).

It is found in the membrane. In terms of biological role, involved in the presentation of foreign antigens to the immune system. The sequence is that of RLA class I histocompatibility antigen, alpha chain 19-1 from Oryctolagus cuniculus (Rabbit).